The sequence spans 276 residues: Large ribosomal subunit protein uL2 (276 aa).

Disordered regions lie at residues 30–57 (EKSLTEKLSKKGGRNNQGRLTVRHQGGG) and 219–276 (TVRG…RSKK).

It belongs to the universal ribosomal protein uL2 family. In terms of assembly, part of the 50S ribosomal subunit. Forms a bridge to the 30S subunit in the 70S ribosome.

Functionally, one of the primary rRNA binding proteins. Required for association of the 30S and 50S subunits to form the 70S ribosome, for tRNA binding and peptide bond formation. It has been suggested to have peptidyltransferase activity; this is somewhat controversial. Makes several contacts with the 16S rRNA in the 70S ribosome. This is Large ribosomal subunit protein uL2 from Exiguobacterium sibiricum (strain DSM 17290 / CCUG 55495 / CIP 109462 / JCM 13490 / 255-15).